A 152-amino-acid polypeptide reads, in one-letter code: Ribosome maturation factor RimP (152 aa).

Belongs to the RimP family.

The protein resides in the cytoplasm. Required for maturation of 30S ribosomal subunits. The protein is Ribosome maturation factor RimP of Rubrobacter xylanophilus (strain DSM 9941 / JCM 11954 / NBRC 16129 / PRD-1).